A 503-amino-acid polypeptide reads, in one-letter code: Maturase K (503 aa).

Belongs to the intron maturase 2 family. MatK subfamily.

The protein localises to the plastid. It is found in the chloroplast. In terms of biological role, usually encoded in the trnK tRNA gene intron. Probably assists in splicing its own and other chloroplast group II introns. This Purshia tridentata (Antelope bitterbrush) protein is Maturase K.